A 456-amino-acid chain; its full sequence is MTYFFETYGCQMNVAESASVEQLLLARGWTKAVDAQTCDVLIINTCSVRITAETRVFGRLGLFSSLKKKRAFFIILMGCMAQRLHDKIQQQFPRIDYVVGTFAHARFESIFQEIEQKLTQKDYRFEFISERYREHPVSGYRFFASSYSEGSFQSFIPIMNGCNNFCSFCIVPYVRGREISRDLDAILQEVDVLSEKGVREITLLGQNVNSYRGRDREGNIVTFPQLLRHLVRRCEVKDQIKWIRFVSSHPKDLSDDLIATIAQESRLCRLVHLPVQHGANGVLKRMRRSYTREQYLSLVGKLKASVPNVALSTDILIGFPGETEEDFEQTLDLMREVEFDSAFMYHYNPREGTPAYDFPDRIPDATRIARLQRVIALQMSTTLKKMRARVGKTLPVLVESRSRNNPEELFGHTELGEMTVLEGKVDPTYIGRFVDVQVKEVRGRTLRAHLVQERAK.

The MTTase N-terminal domain maps to 1–116 (MTYFFETYGC…FESIFQEIEQ (116 aa)). Positions 10, 46, 79, 162, 166, and 169 each coordinate [4Fe-4S] cluster. The 237-residue stretch at 148-384 (SEGSFQSFIP…IALQMSTTLK (237 aa)) folds into the Radical SAM core domain. A TRAM domain is found at 387 to 452 (RARVGKTLPV…GRTLRAHLVQ (66 aa)).

It belongs to the methylthiotransferase family. MiaB subfamily. As to quaternary structure, monomer. It depends on [4Fe-4S] cluster as a cofactor.

It is found in the cytoplasm. It carries out the reaction N(6)-dimethylallyladenosine(37) in tRNA + (sulfur carrier)-SH + AH2 + 2 S-adenosyl-L-methionine = 2-methylsulfanyl-N(6)-dimethylallyladenosine(37) in tRNA + (sulfur carrier)-H + 5'-deoxyadenosine + L-methionine + A + S-adenosyl-L-homocysteine + 2 H(+). Catalyzes the methylthiolation of N6-(dimethylallyl)adenosine (i(6)A), leading to the formation of 2-methylthio-N6-(dimethylallyl)adenosine (ms(2)i(6)A) at position 37 in tRNAs that read codons beginning with uridine. The protein is tRNA-2-methylthio-N(6)-dimethylallyladenosine synthase of Treponema pallidum (strain Nichols).